The following is a 423-amino-acid chain: O-methyltransferase aoiF (423 aa).

Asp273 is an S-adenosyl-L-methionine binding site. The Proton acceptor role is filled by His324.

The protein belongs to the class I-like SAM-binding methyltransferase superfamily. Cation-independent O-methyltransferase family.

It participates in secondary metabolite biosynthesis. O-methyltransferase; part of the gene cluster that mediates the biosynthesis of a methylated derivative of known natural products orthosporin and diaporthin. Within the pathway, aoiF catalyzes the biotransformation of orthosporin to diaporthin but also of diaporthin to the final product, by performing a tandem methylation of the polyketide core. Orthosporin is produced by an oxidoreductase that has still to be identified and that catalyzes the stereospecific reduction of the carbonyl moiety of the hexaketide isocoumarin scaffold produced by the non-reducing polyketide synthase aoiG to generate the S-configured secondary alcohol at C-11. This is O-methyltransferase aoiF from Aspergillus oryzae (strain ATCC 42149 / RIB 40) (Yellow koji mold).